Reading from the N-terminus, the 602-residue chain is Sensor histidine kinase AtsR (602 aa).

Helical transmembrane passes span 11 to 31 and 182 to 202; these read IIVA…FLLF and AIVM…LLLF. Residues 242–461 enclose the Histidine kinase domain; that stretch reads MVSHELRTPL…EFVVTLPVEL (220 aa). The residue at position 245 (histidine 245) is a Phosphohistidine; by autocatalysis. In terms of domain architecture, Response regulatory spans 484–601; it reads HALVVDDNEN…TLNGIVSRLR (118 aa). At aspartate 533 the chain carries 4-aspartylphosphate.

The protein localises to the cell inner membrane. The enzyme catalyses ATP + protein L-histidine = ADP + protein N-phospho-L-histidine.. In terms of biological role, member of a two-component regulatory system involved in control of gene expression; inhibits synthesis of (at least) the polyketide antibiotic thailandamide. Its two-component partner may be BTH_I0635. The protein is Sensor histidine kinase AtsR of Burkholderia thailandensis (strain ATCC 700388 / DSM 13276 / CCUG 48851 / CIP 106301 / E264).